The following is a 142-amino-acid chain: Bacilliredoxin ABC2448 (142 aa).

Belongs to the bacilliredoxin family.

In Shouchella clausii (strain KSM-K16) (Alkalihalobacillus clausii), this protein is Bacilliredoxin ABC2448.